Here is a 101-residue protein sequence, read N- to C-terminus: Integration host factor subunit alpha (101 aa).

Positions 49–70 (FGNFQLRDKPQRPGRNPKTGEE) are disordered.

Belongs to the bacterial histone-like protein family. As to quaternary structure, heterodimer of an alpha and a beta chain.

Its function is as follows. This protein is one of the two subunits of integration host factor, a specific DNA-binding protein that functions in genetic recombination as well as in transcriptional and translational control. The sequence is that of Integration host factor subunit alpha from Nitrosospira multiformis (strain ATCC 25196 / NCIMB 11849 / C 71).